Reading from the N-terminus, the 188-residue chain is Trafficking protein particle complex subunit 5 (188 aa).

Serine 10 carries the phosphoserine modification.

The protein belongs to the TRAPP small subunits family. BET3 subfamily. In terms of assembly, component of the multisubunit TRAPP (transport protein particle) complex, which includes at least TRAPPC2, TRAPPC2L, TRAPPC3, TRAPPC3L, TRAPPC4, TRAPPC5, TRAPPC8, TRAPPC9, TRAPPC10, TRAPPC11 and TRAPPC12.

It is found in the golgi apparatus. Its subcellular location is the cis-Golgi network. The protein resides in the endoplasmic reticulum. Its function is as follows. May play a role in vesicular transport from endoplasmic reticulum to Golgi. This chain is Trafficking protein particle complex subunit 5 (Trappc5), found in Mus musculus (Mouse).